A 435-amino-acid polypeptide reads, in one-letter code: Chromatin structure-remodeling complex subunit RSC7 (435 aa).

Residues 1 to 97 are disordered; the sequence is MSDSEGGLAS…DKGVTRSRNR (97 aa). A compositionally biased stretch (acidic residues) spans 30 to 66; that stretch reads DTEDLDIDENDENEDDDYREEEANEGVNEEEISDEEE. The residue at position 86 (Ser86) is a Phosphoserine. The interval 248 to 435 is functional region; able to complement all NPL6 null allele phenotypes; sequence ELRTKGNVIE…QNFEKCNEYI (188 aa).

The protein belongs to the RSC7/SWP82 family. RSC7 subfamily. As to quaternary structure, interacts with ARP7, ARP9, RSC3, RSC8, RSC30 and STH1. Component of the two forms of the RSC complex composed of at least either RSC1 or RSC2, and ARP7, ARP9, LDB7, NPL6, RSC3, RSC30, RSC4, RSC58, RSC6, RSC8, RSC9, SFH1, STH1, HTL1 and probably RTT102. The complexes interact with histone and histone variant components of centromeric chromatin. Component of a fungal-specific module (HTL1-LDB7-NPL6-RSC3-RSC30) within the RSC complex.

The protein localises to the nucleus. Its function is as follows. Component of the chromatin structure remodeling complex (RSC), which is involved in transcription regulation and nucleosome positioning. RSC is responsible for the transfer of a histone octamer from a nucleosome core particle to naked DNA. The reaction requires ATP and involves an activated RSC-nucleosome intermediate. Remodeling reaction also involves DNA translocation, DNA twist and conformational change. As a reconfigurer of centromeric and flanking nucleosomes, RSC complex is required both for proper kinetochore function in chromosome segregation and, via a PKC1-dependent signaling pathway, for organization of the cellular cytoskeleton. Together with HTL1, LDB7, RSC3, RSC30 components, defines a fungal-specific module within the RSC complex that plays a role in many cellular functions including the maintenance of cell wall integrity. Acidic protein important for nuclear protein localization. The polypeptide is Chromatin structure-remodeling complex subunit RSC7 (NPL6) (Saccharomyces cerevisiae (strain ATCC 204508 / S288c) (Baker's yeast)).